The primary structure comprises 335 residues: Glyceraldehyde-3-phosphate dehydrogenase (335 aa).

Residues 12-13 (RI), Asp34, Arg78, and Ser120 contribute to the NAD(+) site. D-glyceraldehyde 3-phosphate contacts are provided by residues 151–153 (SCT) and Thr182. The Nucleophile role is filled by Cys152. An NAD(+)-binding site is contributed by Asn183. D-glyceraldehyde 3-phosphate contacts are provided by residues Arg197, 210-211 (TG), and Arg233. Asn315 serves as a coordination point for NAD(+).

The protein belongs to the glyceraldehyde-3-phosphate dehydrogenase family. In terms of assembly, homotetramer.

It localises to the cytoplasm. The catalysed reaction is D-glyceraldehyde 3-phosphate + phosphate + NAD(+) = (2R)-3-phospho-glyceroyl phosphate + NADH + H(+). The protein operates within carbohydrate degradation; glycolysis; pyruvate from D-glyceraldehyde 3-phosphate: step 1/5. Its function is as follows. Catalyzes the oxidative phosphorylation of glyceraldehyde 3-phosphate (G3P) to 1,3-bisphosphoglycerate (BPG) using the cofactor NAD. The first reaction step involves the formation of a hemiacetal intermediate between G3P and a cysteine residue, and this hemiacetal intermediate is then oxidized to a thioester, with concomitant reduction of NAD to NADH. The reduced NADH is then exchanged with the second NAD, and the thioester is attacked by a nucleophilic inorganic phosphate to produce BPG. In Geobacillus stearothermophilus (Bacillus stearothermophilus), this protein is Glyceraldehyde-3-phosphate dehydrogenase (gap).